The sequence spans 480 residues: O-acyltransferase ausP (480 aa).

Active-site proton acceptor residues include His180 and Asp412.

Belongs to the plant acyltransferase family. Monomer.

The protein operates within secondary metabolite biosynthesis; terpenoid biosynthesis. Functionally, O-acyltransferase; part of the gene cluster that mediates the biosynthesis of calidodehydroaustin, a fungal meroterpenoid. The first step of the pathway is the synthesis of 3,5-dimethylorsellinic acid by the polyketide synthase ausA. 3,5-dimethylorsellinic acid is then prenylated by the polyprenyl transferase ausN. Further epoxidation by the FAD-dependent monooxygenase ausM and cyclization by the probable terpene cyclase ausL lead to the formation of protoaustinoid A. Protoaustinoid A is then oxidized to spiro-lactone preaustinoid A3 by the combined action of the FAD-binding monooxygenases ausB and ausC, and the dioxygenase ausE. Acid-catalyzed keto-rearrangement and ring contraction of the tetraketide portion of preaustinoid A3 by ausJ lead to the formation of preaustinoid A4. The aldo-keto reductase ausK, with the help of ausH, is involved in the next step by transforming preaustinoid A4 into isoaustinone which is in turn hydroxylated by the P450 monooxygenase ausI to form austinolide. The cytochrome P450 monooxygenase ausG modifies austinolide to austinol. Austinol is further acetylated to austin by the O-acetyltransferase ausP, which spontaneously changes to dehydroaustin. The cytochrome P450 monooxygenase ausR then converts dehydroaustin is into 7-dehydrodehydroaustin. The hydroxylation catalyzed by ausR permits the O-acetyltransferase ausQ to add an additional acetyl group to the molecule, leading to the formation of acetoxydehydroaustin. The short chain dehydrogenase ausT catalyzes the reduction of the double bond present between carbon atoms 1 and 2 to convert 7-dehydrodehydroaustin into 1,2-dihydro-7-hydroxydehydroaustin. AusQ catalyzes not only an acetylation reaction but also the addition of the PKS ausV diketide product to 1,2-dihydro-7-hydroxydehydroaustin, forming precalidodehydroaustin. Finally, the iron/alpha-ketoglutarate-dependent dioxygenase converts precalidodehydroaustin into calidodehydroaustin. This Aspergillus calidoustus protein is O-acyltransferase ausP.